Reading from the N-terminus, the 388-residue chain is MSNEFLPLCRPAIDEQDISAVADVLRSGWITTGPKSAELEESILRHTGAQHAVSLSSATAGMHLVLLVLGIGPGDEVITPSMTWVSTVNMITLLGAKPVFVDVDADNLMTDVALIEPLITERTKLIIPVHYAGASLDLDAIYDLGERYKIPVIEDAAHALGCEYKGHPIGKTGTCLFSLHAIKNVTTAEGGIFTTQDAELAARIRRLKFHGLGVDAFDRETQGRAPQAEVIEPGYKYNMPDICAVLALGQMKRIGEITQKRTELALHYRDLLTAVGGITPLSIPSYEHRHCWHLMIIRVDPLICGLNRDQLIARLKECNIGAGIHFKACHTQKYYRENYTAKFGEITKSLTNTEHNSEQICSLPLFPDMNFSDVERVVAAISEIVGNK.

N6-(pyridoxal phosphate)lysine is present on Lys-183.

It belongs to the DegT/DnrJ/EryC1 family. ArnB subfamily. Homodimer. The cofactor is pyridoxal 5'-phosphate.

The enzyme catalyses UDP-4-amino-4-deoxy-beta-L-arabinose + 2-oxoglutarate = UDP-beta-L-threo-pentopyranos-4-ulose + L-glutamate. The protein operates within nucleotide-sugar biosynthesis; UDP-4-deoxy-4-formamido-beta-L-arabinose biosynthesis; UDP-4-deoxy-4-formamido-beta-L-arabinose from UDP-alpha-D-glucuronate: step 2/3. It functions in the pathway bacterial outer membrane biogenesis; lipopolysaccharide biosynthesis. Functionally, catalyzes the conversion of UDP-4-keto-arabinose (UDP-Ara4O) to UDP-4-amino-4-deoxy-L-arabinose (UDP-L-Ara4N). The modified arabinose is attached to lipid A and is required for resistance to polymyxin and cationic antimicrobial peptides. This chain is UDP-4-amino-4-deoxy-L-arabinose--oxoglutarate aminotransferase, found in Shewanella sediminis (strain HAW-EB3).